Reading from the N-terminus, the 182-residue chain is Crossover junction endodeoxyribonuclease RuvC (182 aa).

Active-site residues include Asp7, Glu69, and Asp141. Residues Asp7, Glu69, and Asp141 each contribute to the Mg(2+) site.

The protein belongs to the RuvC family. Homodimer which binds Holliday junction (HJ) DNA. The HJ becomes 2-fold symmetrical on binding to RuvC with unstacked arms; it has a different conformation from HJ DNA in complex with RuvA. In the full resolvosome a probable DNA-RuvA(4)-RuvB(12)-RuvC(2) complex forms which resolves the HJ. It depends on Mg(2+) as a cofactor.

It localises to the cytoplasm. It carries out the reaction Endonucleolytic cleavage at a junction such as a reciprocal single-stranded crossover between two homologous DNA duplexes (Holliday junction).. The RuvA-RuvB-RuvC complex processes Holliday junction (HJ) DNA during genetic recombination and DNA repair. Endonuclease that resolves HJ intermediates. Cleaves cruciform DNA by making single-stranded nicks across the HJ at symmetrical positions within the homologous arms, yielding a 5'-phosphate and a 3'-hydroxyl group; requires a central core of homology in the junction. The consensus cleavage sequence is 5'-(A/T)TT(C/G)-3'. Cleavage occurs on the 3'-side of the TT dinucleotide at the point of strand exchange. HJ branch migration catalyzed by RuvA-RuvB allows RuvC to scan DNA until it finds its consensus sequence, where it cleaves and resolves the cruciform DNA. The polypeptide is Crossover junction endodeoxyribonuclease RuvC (Albidiferax ferrireducens (strain ATCC BAA-621 / DSM 15236 / T118) (Rhodoferax ferrireducens)).